The chain runs to 338 residues: Lipoate-protein ligase A (338 aa).

A BPL/LPL catalytic domain is found at 29–216 (PATQRVLFLW…AFFVHYGERV (188 aa)). ATP is bound by residues Arg-71, 76-79 (GAVF), and Lys-134. Lys-134 serves as a coordination point for (R)-lipoate.

The protein belongs to the LplA family. Monomer.

It localises to the cytoplasm. It carries out the reaction L-lysyl-[lipoyl-carrier protein] + (R)-lipoate + ATP = N(6)-[(R)-lipoyl]-L-lysyl-[lipoyl-carrier protein] + AMP + diphosphate + H(+). Its pathway is protein modification; protein lipoylation via exogenous pathway; protein N(6)-(lipoyl)lysine from lipoate: step 1/2. It functions in the pathway protein modification; protein lipoylation via exogenous pathway; protein N(6)-(lipoyl)lysine from lipoate: step 2/2. Functionally, catalyzes both the ATP-dependent activation of exogenously supplied lipoate to lipoyl-AMP and the transfer of the activated lipoyl onto the lipoyl domains of lipoate-dependent enzymes. This is Lipoate-protein ligase A from Salmonella newport (strain SL254).